The sequence spans 719 residues: Calpain-12 (719 aa).

The Calpain catalytic domain maps to Leu45–Ser341. Active-site residues include Cys105, His259, and Asn283. Positions Pro342–Ser540 are domain III. Residues Asp393–Gly402 are compositionally biased toward acidic residues. The interval Asp393–Gly418 is disordered. The interval Leu541–Ser719 is domain IV. An EF-hand domain is found at Gly620–His655. Positions 633, 635, 637, 639, and 644 each coordinate Ca(2+).

It belongs to the peptidase C2 family.

Functionally, calcium-regulated non-lysosomal thiol-protease. This Homo sapiens (Human) protein is Calpain-12 (CAPN12).